The sequence spans 735 residues: Trafficking protein particle complex subunit 12 (735 aa).

Disordered regions lie at residues 1-204 (MEDA…QPSP) and 237-276 (NPGAGSPAPASPPPLAVPGTEGRPEPVAMRGPQAAAPPAS). Residues 13–22 (PEAPHPPQLA) show a composition bias toward pro residues. Acidic residues predominate over residues 34–50 (ETIDLGGDEFGSEENET). 2 positions are modified to phosphoserine: S109 and S184. TPR repeat units lie at residues 545-578 (GRVMYSMANCLLLMKDYVLAVEAYHSVIKYYPEQ), 580-613 (PQLLSGIGRISLQIGDIKTAEKYFQDVEKVTQKL), 620-653 (IMVLMNSAFLHLGQNNFAEAHRFFTEILRMDPRN), and 654-687 (AVANNNAAVCLLYLGKLKDSLRQLEAMVQQDPRH).

As to quaternary structure, component of the multisubunit TRAPP (transport protein particle) complex, which includes at least TRAPPC2, TRAPPC2L, TRAPPC3, TRAPPC3L, TRAPPC4, TRAPPC5, TRAPPC8, TRAPPC9, TRAPPC10, TRAPPC11 and TRAPPC12. Interacts with CENPE. In terms of processing, phosphorylated as the cells enter mitosis but is dephosphorylated at or before the onset of anaphase. The phosphorylated form recruits CENPE to kinetochores more efficiently than the non-phosphorylated form.

Its subcellular location is the endoplasmic reticulum-Golgi intermediate compartment. It localises to the nucleus. In terms of biological role, component of the TRAPP complex, which is involved in endoplasmic reticulum to Golgi apparatus trafficking at a very early stage. Also plays a role in chromosome congression, kinetochore assembly and stability and controls the recruitment of CENPE to the kinetochores. The protein is Trafficking protein particle complex subunit 12 of Homo sapiens (Human).